The following is a 342-amino-acid chain: Phosphate acyltransferase (342 aa).

This sequence belongs to the PlsX family. In terms of assembly, homodimer. Probably interacts with PlsY.

Its subcellular location is the cytoplasm. It carries out the reaction a fatty acyl-[ACP] + phosphate = an acyl phosphate + holo-[ACP]. It participates in lipid metabolism; phospholipid metabolism. Catalyzes the reversible formation of acyl-phosphate (acyl-PO(4)) from acyl-[acyl-carrier-protein] (acyl-ACP). This enzyme utilizes acyl-ACP as fatty acyl donor, but not acyl-CoA. In Leuconostoc mesenteroides subsp. mesenteroides (strain ATCC 8293 / DSM 20343 / BCRC 11652 / CCM 1803 / JCM 6124 / NCDO 523 / NBRC 100496 / NCIMB 8023 / NCTC 12954 / NRRL B-1118 / 37Y), this protein is Phosphate acyltransferase.